Consider the following 656-residue polypeptide: UvrABC system protein B (656 aa).

The region spanning 24–409 (QGVRNRTPSQ…QGHIVEQILR (386 aa)) is the Helicase ATP-binding domain. 37 to 44 (GTTGSGKT) is a binding site for ATP. Residues 90–113 (YYDYYQPEAYIARNDTYIEKSLLI) carry the Beta-hairpin motif. The Helicase C-terminal domain maps to 426–589 (QVDDLLEEIR…ITPKPIIKAI (164 aa)). In terms of domain architecture, UVR spans 616–651 (EKLIKKYENLMLQAANAFRFDEAAQYRDKMKAAKEQ).

The protein belongs to the UvrB family. As to quaternary structure, forms a heterotetramer with UvrA during the search for lesions. Interacts with UvrC in an incision complex.

It is found in the cytoplasm. Functionally, the UvrABC repair system catalyzes the recognition and processing of DNA lesions. A damage recognition complex composed of 2 UvrA and 2 UvrB subunits scans DNA for abnormalities. Upon binding of the UvrA(2)B(2) complex to a putative damaged site, the DNA wraps around one UvrB monomer. DNA wrap is dependent on ATP binding by UvrB and probably causes local melting of the DNA helix, facilitating insertion of UvrB beta-hairpin between the DNA strands. Then UvrB probes one DNA strand for the presence of a lesion. If a lesion is found the UvrA subunits dissociate and the UvrB-DNA preincision complex is formed. This complex is subsequently bound by UvrC and the second UvrB is released. If no lesion is found, the DNA wraps around the other UvrB subunit that will check the other stand for damage. In Chlamydia abortus (strain DSM 27085 / S26/3) (Chlamydophila abortus), this protein is UvrABC system protein B.